The chain runs to 207 residues: MAPRGNQMLGNAHFRKHWHKRIKTWFDQPARKLRRRQNRQAKAVEIAPRPVAGLLRSVVRCPQKRYNTKTRLGRGFSLQELKAAGISQAQARTIGIAVDVRRTNKTAEGLKANADRLKEYKAKLILFPKKASAPKKGDSSAEELKVAAQLRGDVLPLSHTITFDEPRQVTDAERKVEIFRLLRKERADKKYRGKREKRAREAAEENK.

Belongs to the eukaryotic ribosomal protein eL13 family. In terms of assembly, component of the 60S large ribosomal subunit (LSU).

It is found in the cytoplasm. Component of the ribosome, a large ribonucleoprotein complex responsible for the synthesis of proteins in the cell. The small ribosomal subunit (SSU) binds messenger RNAs (mRNAs) and translates the encoded message by selecting cognate aminoacyl-transfer RNA (tRNA) molecules. The large subunit (LSU) contains the ribosomal catalytic site termed the peptidyl transferase center (PTC), which catalyzes the formation of peptide bonds, thereby polymerizing the amino acids delivered by tRNAs into a polypeptide chain. The nascent polypeptides leave the ribosome through a tunnel in the LSU and interact with protein factors that function in enzymatic processing, targeting, and the membrane insertion of nascent chains at the exit of the ribosomal tunnel. As part of the LSU, it is probably required for its formation and the maturation of rRNAs. The protein is Large ribosomal subunit protein eL13 (rpl-13) of Caenorhabditis elegans.